The chain runs to 449 residues: UDP-N-acetylmuramoylalanine--D-glutamate ligase (449 aa).

Gly119–Thr125 contributes to the ATP binding site.

Belongs to the MurCDEF family.

It is found in the cytoplasm. The catalysed reaction is UDP-N-acetyl-alpha-D-muramoyl-L-alanine + D-glutamate + ATP = UDP-N-acetyl-alpha-D-muramoyl-L-alanyl-D-glutamate + ADP + phosphate + H(+). The protein operates within cell wall biogenesis; peptidoglycan biosynthesis. Its function is as follows. Cell wall formation. Catalyzes the addition of glutamate to the nucleotide precursor UDP-N-acetylmuramoyl-L-alanine (UMA). In Lactococcus lactis subsp. cremoris (strain SK11), this protein is UDP-N-acetylmuramoylalanine--D-glutamate ligase.